Here is a 193-residue protein sequence, read N- to C-terminus: NADH-quinone oxidoreductase subunit B (193 aa).

The [4Fe-4S] cluster site is built by Cys-72, Cys-73, Cys-137, and Cys-167.

Belongs to the complex I 20 kDa subunit family. As to quaternary structure, NDH-1 is composed of 14 different subunits. Subunits NuoB, C, D, E, F, and G constitute the peripheral sector of the complex. Requires [4Fe-4S] cluster as cofactor.

The protein resides in the cell inner membrane. It catalyses the reaction a quinone + NADH + 5 H(+)(in) = a quinol + NAD(+) + 4 H(+)(out). Its function is as follows. NDH-1 shuttles electrons from NADH, via FMN and iron-sulfur (Fe-S) centers, to quinones in the respiratory chain. The immediate electron acceptor for the enzyme in this species is believed to be ubiquinone. Couples the redox reaction to proton translocation (for every two electrons transferred, four hydrogen ions are translocated across the cytoplasmic membrane), and thus conserves the redox energy in a proton gradient. This Phenylobacterium zucineum (strain HLK1) protein is NADH-quinone oxidoreductase subunit B.